The chain runs to 81 residues: Small ribosomal subunit protein eS21 (81 aa).

This sequence belongs to the eukaryotic ribosomal protein eS21 family.

In Zea mays (Maize), this protein is Small ribosomal subunit protein eS21 (RPS21).